The chain runs to 1637 residues: Glutamate rich 3 (1637 aa).

Disordered regions lie at residues proline 145–leucine 192, proline 408–cysteine 453, glutamate 478–glycine 814, valine 1111–glutamate 1194, isoleucine 1238–arginine 1445, and lysine 1457–alanine 1637. Positions leucine 169–serine 185 are enriched in polar residues. Composition is skewed to basic and acidic residues over residues glutamate 416–proline 426, lysine 443–serine 452, and glutamate 478–valine 487. Over residues tyrosine 500–aspartate 523 the composition is skewed to acidic residues. The span at threonine 534 to serine 557 shows a compositional bias: basic and acidic residues. The span at glutamate 558–arginine 572 shows a compositional bias: acidic residues. Low complexity-rich tracts occupy residues serine 579–serine 590 and glutamate 608–serine 617. 8 stretches are compositionally biased toward basic and acidic residues: residues aspartate 619 to glutamate 638, glutamate 677 to alanine 693, glutamine 769 to methionine 802, glutamate 1115 to glycine 1130, leucine 1264 to glutamate 1307, lysine 1319 to alanine 1329, serine 1342 to glutamate 1357, and arginine 1402 to aspartate 1412. The span at valine 1476–methionine 1487 shows a compositional bias: polar residues. 3 stretches are compositionally biased toward basic and acidic residues: residues alanine 1550–valine 1568, alanine 1589–alanine 1599, and glycine 1614–alanine 1637.

The protein localises to the cell projection. It is found in the cilium. It localises to the cytoplasm. Its function is as follows. Component of the primary cilium that controls cilium formation and length. May function within retrograde intraflagellar transport (IFT)-associated pathways to remove signaling proteins from primary cilia. Also involved in neuronal vesicle biogenesis and neurotransmitter vesicular function. The sequence is that of Glutamate rich 3 from Mus musculus (Mouse).